The chain runs to 231 residues: 4-aminobenzoate synthase (231 aa).

Glu-81, His-88, Glu-142, His-174, Asp-178, and His-181 together coordinate Fe(2+).

The protein belongs to the CADD family. As to quaternary structure, homodimer. During infection, interacts with death domains of mammalian tumor necrosis factor (TNF) family receptors Fas, DR4, DR5 and to some extent TNFR1, but not with the respective downstream adapters. It depends on Fe(2+) as a cofactor. Requires Mn(2+) as cofactor.

The protein resides in the secreted. It is found in the host cytoplasm. The protein is a cosubstrate rather than a true enzyme and is left in an inactive state after a single turnover. Inactive under anaerobic conditions. In terms of biological role, involved in de novo para-aminobenzoate (PABA) biosynthesis. Acts as a self-sacrificing or 'suicide' enzyme that utilizes its own active site tyrosine residue(s) as the substrate for PABA synthesis. The side chain of the tyrosine residue is released from the protein backbone via cleavage of the C(alpha)-C(beta) bond, leaving a glycine in place of the original tyrosine residue. Reaction requires O(2) and a reduced dimetal cofactor. Was also identified as a specific toxin that associates with death domains of tumor necrosis factor family (TNF) receptors and induces apoptosis in mammalian cell lines through a Caspase-dependent mechanism. The sequence is that of 4-aminobenzoate synthase from Chlamydia trachomatis serovar D (strain ATCC VR-885 / DSM 19411 / UW-3/Cx).